The chain runs to 106 residues: Valine dehydrogenase (106 aa).

K91 is an active-site residue.

It belongs to the Glu/Leu/Phe/Val dehydrogenases family. In terms of assembly, homodimer.

The protein resides in the cytoplasm. The enzyme catalyses L-valine + NAD(+) + H2O = 3-methyl-2-oxobutanoate + NH4(+) + NADH + H(+). Its pathway is amino-acid degradation; L-valine degradation. Oxidative deamination of branched-chain amino acids. The catabolism of valine is the major source of fatty acid precursors for macrolide biosynthesis and a vital source of antibiotic precursors. The polypeptide is Valine dehydrogenase (vdh) (Streptomyces ambofaciens).